The chain runs to 325 residues: Methionine import ATP-binding protein MetN 3 (325 aa).

Residues 2–239 (IEVQQLCKVY…PQSALGRALL (238 aa)) form the ABC transporter domain. 36–43 (GRSGAGKS) provides a ligand contact to ATP.

This sequence belongs to the ABC transporter superfamily. Methionine importer (TC 3.A.1.24) family. The complex is composed of two ATP-binding proteins (MetN), two transmembrane proteins (MetI) and a solute-binding protein (MetQ).

It is found in the cell inner membrane. The catalysed reaction is L-methionine(out) + ATP + H2O = L-methionine(in) + ADP + phosphate + H(+). It catalyses the reaction D-methionine(out) + ATP + H2O = D-methionine(in) + ADP + phosphate + H(+). In terms of biological role, part of the ABC transporter complex MetNIQ involved in methionine import. Responsible for energy coupling to the transport system. This chain is Methionine import ATP-binding protein MetN 3, found in Pseudomonas fluorescens (strain ATCC BAA-477 / NRRL B-23932 / Pf-5).